Consider the following 409-residue polypeptide: Transforming growth factor beta-3 proprotein (409 aa).

A signal peptide spans 1–21; that stretch reads MHLQRALVVLALLNFATVSLS. Residues Asn-72, Asn-133, and Asn-140 are each glycosylated (N-linked (GlcNAc...) asparagine). The short motif at 259–261 is the Cell attachment site element; that stretch reads RGD. 4 disulfide bridges follow: Cys-304/Cys-313, Cys-312/Cys-375, Cys-341/Cys-406, and Cys-345/Cys-408.

The protein belongs to the TGF-beta family. In terms of assembly, interacts with ASPN. Latency-associated peptide: Homodimer; disulfide-linked. Latency-associated peptide: Interacts with Transforming growth factor beta-3 (TGF-beta-3) chain; interaction is non-covalent and maintains (TGF-beta-3) in a latent state. Latency-associated peptide: Interacts with LRRC32/GARP; leading to regulate activation of TGF-beta-3 and promote epithelial fusion during palate development. Latency-associated peptide: Interacts (via cell attachment site) with integrins, leading to release of the active TGF-beta-3. Transforming growth factor beta-3: Homodimer; disulfide-linked. Transforming growth factor beta-3: Interacts with TGF-beta receptors (TGFBR1 and TGFBR2), leading to signal transduction. Transforming growth factor beta-3 proprotein: The precursor proprotein is cleaved in the Golgi apparatus to form Transforming growth factor beta-3 (TGF-beta-3) and Latency-associated peptide (LAP) chains, which remain non-covalently linked, rendering TGF-beta-3 inactive.

Its subcellular location is the secreted. The protein localises to the extracellular space. The protein resides in the extracellular matrix. Transforming growth factor beta-3 proprotein: Precursor of the Latency-associated peptide (LAP) and Transforming growth factor beta-3 (TGF-beta-3) chains, which constitute the regulatory and active subunit of TGF-beta-3, respectively. Its function is as follows. Required to maintain the Transforming growth factor beta-3 (TGF-beta-3) chain in a latent state during storage in extracellular matrix. Associates non-covalently with TGF-beta-3 and regulates its activation via interaction with 'milieu molecules', such as LTBP1 and LRRC32/GARP, that control activation of TGF-beta-3. Interaction with integrins results in distortion of the Latency-associated peptide chain and subsequent release of the active TGF-beta-3. Functionally, transforming growth factor beta-3: Multifunctional protein that regulates embryogenesis and cell differentiation and is required in various processes such as secondary palate development. Activation into mature form follows different steps: following cleavage of the proprotein in the Golgi apparatus, Latency-associated peptide (LAP) and Transforming growth factor beta-3 (TGF-beta-3) chains remain non-covalently linked rendering TGF-beta-3 inactive during storage in extracellular matrix. At the same time, LAP chain interacts with 'milieu molecules', such as LTBP1 and LRRC32/GARP that control activation of TGF-beta-3 and maintain it in a latent state during storage in extracellular milieus. TGF-beta-3 is released from LAP by integrins: integrin-binding results in distortion of the LAP chain and subsequent release of the active TGF-beta-3. Once activated following release of LAP, TGF-beta-3 acts by binding to TGF-beta receptors (TGFBR1 and TGFBR2), which transduce signal. In Sus scrofa (Pig), this protein is Transforming growth factor beta-3 proprotein (TGFB3).